The primary structure comprises 417 residues: COP9 signalosome complex subunit 7a (417 aa).

One can recognise a PCI domain in the interval 2-179 (EQTKALNALE…EMVQINSVAA (178 aa)). Residues 240–417 (DEQKGAVPSS…KRGSKRKLTA (178 aa)) form a disordered region. Gly residues predominate over residues 263 to 290 (RGGGGGGDGAGAGGSFRGSGYSRGGGLS). 3 stretches are compositionally biased toward low complexity: residues 291-311 (QGYR…SRQQ), 320-330 (SNQSGTNSLLT), and 343-352 (PSAVSPSAAA). Residues 367 to 379 (METGSGSGSGPLG) are compositionally biased toward gly residues. Over residues 385 to 405 (DMDDSEEDIDDDTMDLDDEGD) the composition is skewed to acidic residues.

The protein belongs to the CSN7/EIF3M family. CSN7 subfamily. Component of the COP9 signalosome (CSN) complex.

It is found in the cytoplasm. The protein localises to the nucleus. Component of the COP9 signalosome (CSN) complex that acts as an regulator of the ubiquitin (Ubl) conjugation pathway by mediating the deneddylation of the cullin subunit of SCF-type E3 ubiquitin-protein ligase complexes. The CSN complex is involved in the regulation of the circadian clock through its control of the stability of the SCF(FWD1) complex. This Neurospora crassa (strain ATCC 24698 / 74-OR23-1A / CBS 708.71 / DSM 1257 / FGSC 987) protein is COP9 signalosome complex subunit 7a (csn-7a).